The primary structure comprises 149 residues: uncharacterized protein (149 aa).

The interval 34 to 94 is disordered; the sequence is HTPCLPKVPR…NPIGSQRIHS (61 aa). The segment covering 56-66 has biased composition (basic and acidic residues); it reads QSPHRQGDRRR.

Its subcellular location is the mitochondrion. This is an uncharacterized protein from Arabidopsis thaliana (Mouse-ear cress).